Consider the following 383-residue polypeptide: S-adenosylmethionine synthase (383 aa).

Residue His15 participates in ATP binding. Asp17 contacts Mg(2+). Glu43 is a K(+) binding site. L-methionine contacts are provided by Glu56 and Gln99. The flexible loop stretch occupies residues Gln99–Lys109. ATP is bound by residues Asp164 to Lys166, Arg230 to Phe231, Asp239, Arg245 to Lys246, Ala262, and Lys266. Asp239 contacts L-methionine. Lys270 is a binding site for L-methionine.

Belongs to the AdoMet synthase family. As to quaternary structure, homotetramer; dimer of dimers. Mg(2+) is required as a cofactor. It depends on K(+) as a cofactor.

The protein resides in the cytoplasm. It catalyses the reaction L-methionine + ATP + H2O = S-adenosyl-L-methionine + phosphate + diphosphate. It participates in amino-acid biosynthesis; S-adenosyl-L-methionine biosynthesis; S-adenosyl-L-methionine from L-methionine: step 1/1. Functionally, catalyzes the formation of S-adenosylmethionine (AdoMet) from methionine and ATP. The overall synthetic reaction is composed of two sequential steps, AdoMet formation and the subsequent tripolyphosphate hydrolysis which occurs prior to release of AdoMet from the enzyme. This chain is S-adenosylmethionine synthase, found in Vibrio atlanticus (strain LGP32) (Vibrio splendidus (strain Mel32)).